Consider the following 420-residue polypeptide: Putative FBD-associated F-box protein At1g78730 (420 aa).

The F-box domain occupies 21-71 (LDWLRKLPDSLLCQVFLNLPTKDVVKTSVLSSTWGNIWRSVPGLDLGYGDF). Positions 341-390 (ISILPGPQCNLPALEFVDILKPMVEKETELKLMSYFLEKSTILKKLTLRL) constitute an FBD domain.

The polypeptide is Putative FBD-associated F-box protein At1g78730 (Arabidopsis thaliana (Mouse-ear cress)).